Consider the following 156-residue polypeptide: Small ribosomal subunit protein uS7 (156 aa).

Belongs to the universal ribosomal protein uS7 family. In terms of assembly, part of the 30S ribosomal subunit. Contacts proteins S9 and S11.

Its function is as follows. One of the primary rRNA binding proteins, it binds directly to 16S rRNA where it nucleates assembly of the head domain of the 30S subunit. Is located at the subunit interface close to the decoding center, probably blocks exit of the E-site tRNA. This chain is Small ribosomal subunit protein uS7, found in Treponema pallidum (strain Nichols).